Consider the following 425-residue polypeptide: Formyl-CoA:oxalate CoA-transferase (425 aa).

CoA is bound by residues 17–18, R38, 72–75, 96–98, R104, and 136–139; these read QS, LDTK, NFG, and KVYE. D168 acts as the Nucleophile in catalysis. Residue 247 to 249 coordinates substrate; it reads GGQ.

The protein belongs to the CoA-transferase III family. Frc subfamily. As to quaternary structure, homodimer.

The catalysed reaction is formyl-CoA + oxalate = oxalyl-CoA + formate. The protein operates within metabolic intermediate degradation; oxalate degradation; CO(2) and formate from oxalate: step 1/2. In terms of biological role, involved in the catabolism of oxalate and in the adapatation to low pH via the induction of the oxalate-dependent acid tolerance response (ATR). Catalyzes the transfer of the CoA moiety from formyl-CoA to oxalate. This is Formyl-CoA:oxalate CoA-transferase from Rhodopseudomonas palustris (strain ATCC BAA-98 / CGA009).